A 126-amino-acid chain; its full sequence is Aspartate 1-decarboxylase (126 aa).

The active-site Schiff-base intermediate with substrate; via pyruvic acid is the Ser25. A Pyruvic acid (Ser) modification is found at Ser25. A substrate-binding site is contributed by Thr57. The active-site Proton donor is Tyr58. Residue 73–75 (GAA) coordinates substrate.

Belongs to the PanD family. Heterooctamer of four alpha and four beta subunits. Pyruvate serves as cofactor. Is synthesized initially as an inactive proenzyme, which is activated by self-cleavage at a specific serine bond to produce a beta-subunit with a hydroxyl group at its C-terminus and an alpha-subunit with a pyruvoyl group at its N-terminus.

It localises to the cytoplasm. It catalyses the reaction L-aspartate + H(+) = beta-alanine + CO2. It functions in the pathway cofactor biosynthesis; (R)-pantothenate biosynthesis; beta-alanine from L-aspartate: step 1/1. Catalyzes the pyruvoyl-dependent decarboxylation of aspartate to produce beta-alanine. This is Aspartate 1-decarboxylase from Escherichia coli O6:H1 (strain CFT073 / ATCC 700928 / UPEC).